The sequence spans 143 residues: 3-dehydroquinate dehydratase (143 aa).

The Proton acceptor role is filled by tyrosine 22. Positions 73, 79, and 86 each coordinate substrate. Histidine 99 (proton donor) is an active-site residue. Substrate contacts are provided by residues 100 to 101 (IS) and arginine 110.

The protein belongs to the type-II 3-dehydroquinase family. Homododecamer.

It carries out the reaction 3-dehydroquinate = 3-dehydroshikimate + H2O. Its pathway is metabolic intermediate biosynthesis; chorismate biosynthesis; chorismate from D-erythrose 4-phosphate and phosphoenolpyruvate: step 3/7. Its function is as follows. Catalyzes a trans-dehydration via an enolate intermediate. The sequence is that of 3-dehydroquinate dehydratase from Mycolicibacterium paratuberculosis (strain ATCC BAA-968 / K-10) (Mycobacterium paratuberculosis).